We begin with the raw amino-acid sequence, 360 residues long: uncharacterized protein (360 aa).

A run of 6 helical transmembrane segments spans residues 12 to 32 (ILPL…ITQI), 52 to 72 (VVLV…VIAV), 96 to 116 (IQLA…AYYI), 278 to 298 (IIWP…FLRY), 306 to 326 (FMPV…HFIL), and 336 to 356 (FIFA…YLLV).

It localises to the cell membrane. This is an uncharacterized protein from Rickettsia prowazekii (strain Madrid E).